Reading from the N-terminus, the 309-residue chain is Ribonuclease Z (309 aa).

Positions 63, 65, 67, 68, 141, 212, and 270 each coordinate Zn(2+). The active-site Proton acceptor is the aspartate 67.

The protein belongs to the RNase Z family. Homodimer. Zn(2+) serves as cofactor.

It carries out the reaction Endonucleolytic cleavage of RNA, removing extra 3' nucleotides from tRNA precursor, generating 3' termini of tRNAs. A 3'-hydroxy group is left at the tRNA terminus and a 5'-phosphoryl group is left at the trailer molecule.. In terms of biological role, zinc phosphodiesterase, which displays some tRNA 3'-processing endonuclease activity. Probably involved in tRNA maturation, by removing a 3'-trailer from precursor tRNA. The protein is Ribonuclease Z of Lactobacillus johnsonii (strain CNCM I-12250 / La1 / NCC 533).